Reading from the N-terminus, the 182-residue chain is Transcription termination/antitermination protein NusG (182 aa).

Belongs to the NusG family.

Participates in transcription elongation, termination and antitermination. This is Transcription termination/antitermination protein NusG from Chlamydia trachomatis serovar D (strain ATCC VR-885 / DSM 19411 / UW-3/Cx).